Here is a 322-residue protein sequence, read N- to C-terminus: uncharacterized protein (322 aa).

Residues 1-32 (MRDGIGKRAASALFLCGVLVMLAVSSAIVSSA) form the signal peptide.

This is an uncharacterized protein from Bacillus subtilis (strain 168).